Reading from the N-terminus, the 214-residue chain is Adenylate kinase (214 aa).

ATP is bound at residue 10 to 15 (GAGKGT). Positions 30 to 59 (STGDMLRAAIKAGTELGKQAKTLMDAGQLV) are NMP. Residues Thr31, Arg36, 57 to 59 (QLV), 85 to 88 (GFPR), and Gln92 contribute to the AMP site. The segment at 122-159 (GRRVHPASGRSYHVVYNPPKVEGKDDVTGEDLIIRADD) is LID. Residues Arg123 and 132 to 133 (SY) each bind ATP. Positions 156 and 167 each coordinate AMP. Gln200 serves as a coordination point for ATP.

Belongs to the adenylate kinase family. In terms of assembly, monomer.

The protein resides in the cytoplasm. It catalyses the reaction AMP + ATP = 2 ADP. Its pathway is purine metabolism; AMP biosynthesis via salvage pathway; AMP from ADP: step 1/1. Functionally, catalyzes the reversible transfer of the terminal phosphate group between ATP and AMP. Plays an important role in cellular energy homeostasis and in adenine nucleotide metabolism. This Actinobacillus succinogenes (strain ATCC 55618 / DSM 22257 / CCUG 43843 / 130Z) protein is Adenylate kinase.